Consider the following 215-residue polypeptide: Rho-related GTP-binding protein RhoF (215 aa).

Position 1 is an N-acetylmethionine (Met-1). 30-37 is a GTP binding site; sequence GDGGCGKT. The Effector region motif lies at 52-60; that stretch reads YAPSVFEKY. GTP is bound by residues 77–81 and 135–138; these read DTAGQ and CKTD. At Cys-212 the chain carries Cysteine methyl ester. A lipid anchor (S-geranylgeranyl cysteine) is attached at Cys-212. Positions 213–215 are cleaved as a propeptide — removed in mature form; that stretch reads LLL.

Belongs to the small GTPase superfamily. Rho family.

The protein localises to the cell membrane. Its subcellular location is the cytoplasm. It localises to the cytoskeleton. Its function is as follows. Plasma membrane-associated small GTPase which cycles between an active GTP-bound and an inactive GDP-bound state. Causes the formation of thin, actin-rich surface projections called filopodia. Functions cooperatively with CDC42 and Rac to generate additional structures, increasing the diversity of actin-based morphology. The polypeptide is Rho-related GTP-binding protein RhoF (RHOF) (Bos taurus (Bovine)).